Here is a 317-residue protein sequence, read N- to C-terminus: tRNA dimethylallyltransferase (317 aa).

14–21 (GPTAVGKT) serves as a coordination point for ATP. 16 to 21 (TAVGKT) lines the substrate pocket. The tract at residues 39–42 (DSMQ) is interaction with substrate tRNA.

This sequence belongs to the IPP transferase family. As to quaternary structure, monomer. Mg(2+) serves as cofactor.

It catalyses the reaction adenosine(37) in tRNA + dimethylallyl diphosphate = N(6)-dimethylallyladenosine(37) in tRNA + diphosphate. Catalyzes the transfer of a dimethylallyl group onto the adenine at position 37 in tRNAs that read codons beginning with uridine, leading to the formation of N6-(dimethylallyl)adenosine (i(6)A). The sequence is that of tRNA dimethylallyltransferase from Bacillus cereus (strain G9842).